Reading from the N-terminus, the 182-residue chain is ATP synthase subunit delta (182 aa).

It belongs to the ATPase delta chain family. As to quaternary structure, F-type ATPases have 2 components, F(1) - the catalytic core - and F(0) - the membrane proton channel. F(1) has five subunits: alpha(3), beta(3), gamma(1), delta(1), epsilon(1). F(0) has three main subunits: a(1), b(2) and c(10-14). The alpha and beta chains form an alternating ring which encloses part of the gamma chain. F(1) is attached to F(0) by a central stalk formed by the gamma and epsilon chains, while a peripheral stalk is formed by the delta and b chains.

The protein localises to the cell membrane. Its function is as follows. F(1)F(0) ATP synthase produces ATP from ADP in the presence of a proton or sodium gradient. F-type ATPases consist of two structural domains, F(1) containing the extramembraneous catalytic core and F(0) containing the membrane proton channel, linked together by a central stalk and a peripheral stalk. During catalysis, ATP synthesis in the catalytic domain of F(1) is coupled via a rotary mechanism of the central stalk subunits to proton translocation. In terms of biological role, this protein is part of the stalk that links CF(0) to CF(1). It either transmits conformational changes from CF(0) to CF(1) or is implicated in proton conduction. This is ATP synthase subunit delta from Lactobacillus johnsonii (strain CNCM I-12250 / La1 / NCC 533).